A 489-amino-acid polypeptide reads, in one-letter code: Pluviatolide synthase (489 aa).

A helical membrane pass occupies residues 6–26 (SVLGLSSTLIIALAITVIFLL). C432 contacts heme.

This sequence belongs to the cytochrome P450 family. Requires heme as cofactor.

The protein resides in the membrane. It carries out the reaction (-)-matairesinol + reduced [NADPH--hemoprotein reductase] + O2 = (-)-pluviatolide + oxidized [NADPH--hemoprotein reductase] + 2 H2O + H(+). Its pathway is aromatic compound metabolism; phenylpropanoid biosynthesis. Cytochrome P450 involved in the biosynthesis of etoposide, a chemotherapeutic compound of the topoisomerase inhibitor family. Catalyzes the conversion of matairesinol to pluviatolide. In Podophyllum peltatum (American mandrake), this protein is Pluviatolide synthase.